We begin with the raw amino-acid sequence, 287 residues long: Myogenin (287 aa).

Phosphoserine; by CaMK2G is present on residues Ser-77 and Ser-79. In terms of domain architecture, bHLH spans 81–132; the sequence is DRRRAATLREKRRLKKVNEAFEALKRSTLLNPNQRLPKVEILRSAIQYIERL. Thr-87 is modified (phosphothreonine; by CaMK2G).

As to quaternary structure, homodimer and heterodimer with E12; heterodimerization enhances MYOG DNA-binding and transcriptional activities. Interacts with SMARCA4/BRG1/BAF190A. Interacts (via C-terminal region) with SSRP1 and SUPT16H; the interaction is indicative of an interaction with the FACT complex. Interacts with CSRP3. Phosphorylated by CAMK2G on threonine and serine amino acids in a muscle activity-dependent manner. Phosphorylation of Thr-87 impairs both DNA-binding and trans-activation functions in contracting muscles. As to expression, expressed in muscle (at protein level).

It localises to the nucleus. Its function is as follows. Acts as a transcriptional activator that promotes transcription of muscle-specific target genes and plays a role in muscle differentiation, cell cycle exit and muscle atrophy. Essential for the development of functional embryonic skeletal fiber muscle differentiation. However is dispensable for postnatal skeletal muscle growth; phosphorylation by CAMK2G inhibits its transcriptional activity in respons to muscle activity. Required for the recruitment of the FACT complex to muscle-specific promoter regions, thus promoting gene expression initiation. During terminal myoblast differentiation, plays a role as a strong activator of transcription at loci with an open chromatin structure previously initiated by MYOD1. Together with MYF5 and MYOD1, co-occupies muscle-specific gene promoter core regions during myogenesis. Also cooperates with myocyte-specific enhancer factor MEF2D and BRG1-dependent recruitment of SWI/SNF chromatin-remodeling enzymes to alter chromatin structure at myogenic late gene promoters. Facilitates cell cycle exit during terminal muscle differentiation through the up-regulation of miR-20a expression, which in turn represses genes involved in cell cycle progression. Binds to the E-box containing (E1) promoter region of the miR-20a gene. Also plays a role in preventing reversal of muscle cell differentiation. Contributes to the atrophy-related gene expression in adult denervated muscles. Induces fibroblasts to differentiate into myoblasts. The polypeptide is Myogenin (Myog) (Rattus norvegicus (Rat)).